Reading from the N-terminus, the 104-residue chain is Protein S100-A14 (104 aa).

Residues lysine 27–asparagine 61 enclose the EF-hand domain.

Belongs to the S-100 family. As to quaternary structure, homodimer. Interacts with AGER. As to expression, expressed at highest levels in colon and at moderate levels in thymus, kidney, liver, small intestine, and lung. Low expression in heart and no expression is seen in brain, skeletal muscle, spleen, placenta and peripheral blood leukocytes.

The protein resides in the cytoplasm. Functionally, modulates P53/TP53 protein levels, and thereby plays a role in the regulation of cell survival and apoptosis. Depending on the context, it can promote cell proliferation or apoptosis. Plays a role in the regulation of cell migration by modulating the levels of MMP2, a matrix protease that is under transcriptional control of P53/TP53. Does not bind calcium. This Homo sapiens (Human) protein is Protein S100-A14 (S100A14).